A 459-amino-acid polypeptide reads, in one-letter code: MSFRFNEAVFGDNSFNERVREKLSTALNSPSKKKLDILKSGIKVQKVDFPTIPQLEILDLDIITQPKSLAKGICKISCKDAMLRIQTVIESNLLLINEQDTPSFTMPQLINNGSFTIPITMTFSSIELEAITNIFVKNPGIGISFNDVDLDFKFDCSVKILQSTIERRLKESMHVVFKDVLPSLIFNTSQNWFTNRGESTSTIPGKREHHHQQTTMSRNVILDGSDFQELSPINMLRLSSIVSSRSTLSLHSTVMNSLSAIPGCLERQNLYRFISRMPSLNNYYSSQSFPQPKSSTVSSKQLVKPFYCSHNLLPKTVLDSSQYDLATITKIQSRLFDRSNSNDDNAKPRRRKIKCKKTRTPSNLQSQGEQAVDDSTAIETVTSTPVQTPIPELEEQSPPYLKTTVSIRDKYVIPEKISLNLDSKKDTSKKKPFYFIGLNSQEPSNNWKWGMEDSPPPYH.

Residues 1-190 (MSFRFNEAVF…LPSLIFNTSQ (190 aa)) form the SMP-LTD domain. Residues 338 to 347 (RSNSNDDNAK) are compositionally biased toward basic and acidic residues. Positions 338–375 (RSNSNDDNAKPRRRKIKCKKTRTPSNLQSQGEQAVDDS) are disordered. The span at 348-359 (PRRRKIKCKKTR) shows a compositional bias: basic residues.

This sequence belongs to the MDM34 family. Component of the ER-mitochondria encounter structure (ERMES) or MDM complex, composed of MMM1, MDM10, MDM12 and MDM34. In terms of processing, ubiquitinated by a SCF (SKP1-CUL1-F-box protein) E3 ubiquitin-protein ligase complex containing the F-box protein MDM30. Ubiquitination is important for mitochondrial integrity.

Its subcellular location is the mitochondrion outer membrane. In terms of biological role, component of the ERMES/MDM complex, which serves as a molecular tether to connect the endoplasmic reticulum (ER) and mitochondria. Components of this complex are involved in the control of mitochondrial shape and protein biogenesis, and function in nonvesicular lipid trafficking between the ER and mitochondria. MDM34 is required for the interaction of the ER-resident membrane protein MMM1 and the outer mitochondrial membrane-resident beta-barrel protein MDM10. The chain is Mitochondrial distribution and morphology protein 34 from Saccharomyces cerevisiae (strain AWRI1631) (Baker's yeast).